The primary structure comprises 148 residues: Myosin light chain 3, skeletal muscle isoform (148 aa).

Threonine 1 carries the post-translational modification N-acetylthreonine. EF-hand domains lie at 6-41 and 82-117; these read DQIE…LGQN and GTYD…LGEK.

In terms of assembly, myosin is a hexamer of 2 heavy chains and 4 light chains.

This chain is Myosin light chain 3, skeletal muscle isoform, found in Chelon ramada (Thin-lipped grey mullet).